A 274-amino-acid polypeptide reads, in one-letter code: Large ribosomal subunit protein uL2 (274 aa).

2 disordered regions span residues 28–55 and 224–274; these read APHA…RHVG and VAMN…RRRK.

The protein belongs to the universal ribosomal protein uL2 family. Part of the 50S ribosomal subunit. Forms a bridge to the 30S subunit in the 70S ribosome.

One of the primary rRNA binding proteins. Required for association of the 30S and 50S subunits to form the 70S ribosome, for tRNA binding and peptide bond formation. It has been suggested to have peptidyltransferase activity; this is somewhat controversial. Makes several contacts with the 16S rRNA in the 70S ribosome. The chain is Large ribosomal subunit protein uL2 from Pseudomonas putida (strain GB-1).